The sequence spans 227 residues: MAGVGAGPLRAMGRQALLLLALCATGAQGLYFHIGETEKRCFIEEIPDETMVIGNYRTQMWDKQKEVFLPSTPGLGMHVEVKDPDGKVVLSRQYGSEGRFTFTSHTPGDHQICLHSNSTRMALFAGGKLRVHLDIQVGEHANNYPEIAAKDKLTELQLRARQLLDQVEQIQKEQDYQRYREERFRLTSESTNQRVLWWSIAQTVILILTGIWQMRHLKSFFEAKKLV.

Residues 1-29 (MAGVGAGPLRAMGRQALLLLALCATGAQG) form the signal peptide. The Lumenal segment spans residues 30–194 (LYFHIGETEK…RLTSESTNQR (165 aa)). In terms of domain architecture, GOLD spans 39 to 137 (KRCFIEEIPD…KLRVHLDIQV (99 aa)). A glycan (N-linked (GlcNAc...) asparagine) is linked at Asn117. Residues 147–176 (IAAKDKLTELQLRARQLLDQVEQIQKEQDY) adopt a coiled-coil conformation. Residues 195–212 (VLWWSIAQTVILILTGIW) traverse the membrane as a helical segment. Topologically, residues 213–227 (QMRHLKSFFEAKKLV) are cytoplasmic. The COPII vesicle coat-binding signature appears at 220–221 (FF). Positions 220-227 (FFEAKKLV) match the COPI vesicle coat-binding motif.

The protein belongs to the EMP24/GP25L family.

The protein localises to the endoplasmic reticulum membrane. Its function is as follows. Involved in vesicular protein trafficking, mainly in the early secretory pathway. targeting. Involved in the maintenance of the Golgi apparatus. Appears to play a role in the biosynthesis of secreted cargo including processing. Involved in endoplasmic reticulum stress response. May play a role in the regulation of heat-shock response and apoptosis. This Homo sapiens (Human) protein is Transmembrane emp24 domain-containing protein 4 (TMED4).